A 360-amino-acid chain; its full sequence is Peptide chain release factor 1 (360 aa).

An N5-methylglutamine modification is found at Gln236. The segment at 288–308 (QDEQDAERKSTIGTGDRSERI) is disordered. A compositionally biased stretch (basic and acidic residues) spans 293-308 (AERKSTIGTGDRSERI).

This sequence belongs to the prokaryotic/mitochondrial release factor family. Methylated by PrmC. Methylation increases the termination efficiency of RF1.

Its subcellular location is the cytoplasm. Peptide chain release factor 1 directs the termination of translation in response to the peptide chain termination codons UAG and UAA. The chain is Peptide chain release factor 1 from Streptococcus equi subsp. equi (strain 4047).